The sequence spans 301 residues: Rhodopsin (301 aa).

The Extracellular portion of the chain corresponds to 1-18; sequence LHMIHLHWYQYPPMNPMM. A helical transmembrane segment spans residues 19–43; that stretch reads YPLLLIFMLFTGILCLAGNFVTIWV. The Cytoplasmic portion of the chain corresponds to 44–55; the sequence is FMNTKSLRTPAN. A helical transmembrane segment spans residues 56-78; sequence LLVVNLAMSDFLMMFTMFPPMMV. Residues 79–92 lie on the Extracellular side of the membrane; that stretch reads TCYYHTWTLGPTFC. The cysteines at positions 92 and 169 are disulfide-linked. Residues 93 to 115 traverse the membrane as a helical segment; the sequence is QVYAFLGNLCGCASIWTMVFITF. The 'Ionic lock' involved in activated form stabilization motif lies at 116–118; that stretch reads DRY. Residues 116 to 134 lie on the Cytoplasmic side of the membrane; sequence DRYNVIVKGVAGEPLSTKK. Residues 135–155 traverse the membrane as a helical segment; sequence ASLWILTIWVLSTTWCIAPFF. Topologically, residues 156-182 are extracellular; that stretch reads GWNHYVPEGNLTGCGTDYLSEDILSRS. Asn-165 carries an N-linked (GlcNAc...) asparagine glycan. A helical membrane pass occupies residues 183-204; that stretch reads YLYVYSTWVYFLPLAITIYCYV. Topologically, residues 205 to 245 are cytoplasmic; it reads FIIKAVAAHEKGMRDQAKKMGIKSLRNEEAQKTSAECRLAK. A helical transmembrane segment spans residues 246–267; it reads IAMTTVALWFIAWTPCLLINWV. The Extracellular portion of the chain corresponds to 268–278; it reads GMFARSYLSPV. The helical transmembrane segment at 279–300 threads the bilayer; sequence YTIWGYVFAKANAVYNPIVYAI. N6-(retinylidene)lysine is present on Lys-288.

The protein belongs to the G-protein coupled receptor 1 family. Opsin subfamily. In terms of assembly, homodimer. Interacts with GNAQ. In terms of processing, contains one covalently linked retinal chromophore.

It is found in the cell projection. It localises to the rhabdomere membrane. Functionally, photoreceptor required for image-forming vision at low light intensity. Can use both retinal and 3-dehydroretinal as visual pigment. Light-induced isomerization of 11-cis to all-trans retinal triggers a conformational change that activates signaling via G-proteins. Signaling via GNAQ probably mediates the activation of phospholipase C. The protein is Rhodopsin (RHO) of Procambarus seminolae (Crayfish).